Consider the following 424-residue polypeptide: UDP-N-acetylglucosamine 1-carboxyvinyltransferase (424 aa).

22 to 23 (KN) lines the phosphoenolpyruvate pocket. Position 93 (R93) interacts with UDP-N-acetyl-alpha-D-glucosamine. The Proton donor role is filled by C117. Residue C117 is modified to 2-(S-cysteinyl)pyruvic acid O-phosphothioketal. Residues 122-126 (RPVDL), 162-165 (KVSV), D307, and I329 each bind UDP-N-acetyl-alpha-D-glucosamine.

Belongs to the EPSP synthase family. MurA subfamily.

The protein localises to the cytoplasm. It catalyses the reaction phosphoenolpyruvate + UDP-N-acetyl-alpha-D-glucosamine = UDP-N-acetyl-3-O-(1-carboxyvinyl)-alpha-D-glucosamine + phosphate. Its pathway is cell wall biogenesis; peptidoglycan biosynthesis. Functionally, cell wall formation. Adds enolpyruvyl to UDP-N-acetylglucosamine. In Histophilus somni (strain 129Pt) (Haemophilus somnus), this protein is UDP-N-acetylglucosamine 1-carboxyvinyltransferase.